Consider the following 362-residue polypeptide: Chorismate synthase (362 aa).

Residues Arg48 and Arg54 each coordinate NADP(+). Residues 131-133 (RSS), 243-244 (NA), Gly287, 302-306 (KPTSS), and Arg328 each bind FMN.

This sequence belongs to the chorismate synthase family. In terms of assembly, homotetramer. FMNH2 is required as a cofactor.

It catalyses the reaction 5-O-(1-carboxyvinyl)-3-phosphoshikimate = chorismate + phosphate. The protein operates within metabolic intermediate biosynthesis; chorismate biosynthesis; chorismate from D-erythrose 4-phosphate and phosphoenolpyruvate: step 7/7. Catalyzes the anti-1,4-elimination of the C-3 phosphate and the C-6 proR hydrogen from 5-enolpyruvylshikimate-3-phosphate (EPSP) to yield chorismate, which is the branch point compound that serves as the starting substrate for the three terminal pathways of aromatic amino acid biosynthesis. This reaction introduces a second double bond into the aromatic ring system. The polypeptide is Chorismate synthase (Rhodopseudomonas palustris (strain TIE-1)).